Consider the following 90-residue polypeptide: Leech factor Xa inhibitor (90 aa).

It localises to the secreted. Its function is as follows. Potent anticoagulant inhibiting the amidolytic activity of factor Xa (F10) (Ki=4nM) and reducing its ability to activate prothrombin (F2) in the prothrombinase complex (EC(50)=40nM). The sequence is that of Leech factor Xa inhibitor from Haementeria depressa (Leech).